The primary structure comprises 114 residues: Ribosome-binding factor A (114 aa).

The protein belongs to the RbfA family. As to quaternary structure, monomer. Binds 30S ribosomal subunits, but not 50S ribosomal subunits or 70S ribosomes.

The protein localises to the cytoplasm. Functionally, one of several proteins that assist in the late maturation steps of the functional core of the 30S ribosomal subunit. Associates with free 30S ribosomal subunits (but not with 30S subunits that are part of 70S ribosomes or polysomes). Required for efficient processing of 16S rRNA. May interact with the 5'-terminal helix region of 16S rRNA. This is Ribosome-binding factor A from Phytoplasma mali (strain AT).